Reading from the N-terminus, the 140-residue chain is 3-hydroxyacyl-[acyl-carrier-protein] dehydratase FabZ (140 aa).

Residue H46 is part of the active site.

Belongs to the thioester dehydratase family. FabZ subfamily.

The protein localises to the cytoplasm. The catalysed reaction is a (3R)-hydroxyacyl-[ACP] = a (2E)-enoyl-[ACP] + H2O. In terms of biological role, involved in unsaturated fatty acids biosynthesis. Catalyzes the dehydration of short chain beta-hydroxyacyl-ACPs and long chain saturated and unsaturated beta-hydroxyacyl-ACPs. The polypeptide is 3-hydroxyacyl-[acyl-carrier-protein] dehydratase FabZ (Pseudothermotoga lettingae (strain ATCC BAA-301 / DSM 14385 / NBRC 107922 / TMO) (Thermotoga lettingae)).